The following is a 740-amino-acid chain: Ion-translocating oxidoreductase complex subunit C (740 aa).

2 consecutive 4Fe-4S ferredoxin-type domains span residues Gly369 to Tyr397 and Lys407 to Phe436. [4Fe-4S] cluster contacts are provided by Cys377, Cys380, Cys383, Cys387, Cys416, Cys419, Cys422, and Cys426. The disordered stretch occupies residues Lys602–Ala718.

This sequence belongs to the 4Fe4S bacterial-type ferredoxin family. RnfC subfamily. In terms of assembly, the complex is composed of six subunits: RsxA, RsxB, RsxC, RsxD, RsxE and RsxG. [4Fe-4S] cluster is required as a cofactor.

It localises to the cell inner membrane. In terms of biological role, part of a membrane-bound complex that couples electron transfer with translocation of ions across the membrane. Required to maintain the reduced state of SoxR. This is Ion-translocating oxidoreductase complex subunit C from Shigella sonnei (strain Ss046).